The primary structure comprises 386 residues: Bifunctional chorismate mutase/prephenate dehydratase (386 aa).

A Chorismate mutase domain is found at 1–92 (MTSENPLLAL…DSVLTQQALL (92 aa)). 7 residues coordinate substrate: Arg-11, Arg-28, Lys-39, Asp-48, Glu-52, Ser-84, and Gln-88. The region spanning 105 to 285 (RIAFLGPKGS…NFTRFVVLAR (181 aa)) is the Prephenate dehydratase domain. The ACT domain occupies 299-376 (TLLMATGQQA…RSMKVLGCYP (78 aa)).

The protein resides in the cytoplasm. It catalyses the reaction chorismate = prephenate. It carries out the reaction prephenate + H(+) = 3-phenylpyruvate + CO2 + H2O. It participates in amino-acid biosynthesis; L-phenylalanine biosynthesis; phenylpyruvate from prephenate: step 1/1. It functions in the pathway metabolic intermediate biosynthesis; prephenate biosynthesis; prephenate from chorismate: step 1/1. Catalyzes the Claisen rearrangement of chorismate to prephenate and the decarboxylation/dehydration of prephenate to phenylpyruvate. In Escherichia coli O157:H7, this protein is Bifunctional chorismate mutase/prephenate dehydratase (pheA).